The primary structure comprises 291 residues: 33 kDa chaperonin (291 aa).

Intrachain disulfides connect cysteine 229–cysteine 231 and cysteine 262–cysteine 265.

This sequence belongs to the HSP33 family. Under oxidizing conditions two disulfide bonds are formed involving the reactive cysteines. Under reducing conditions zinc is bound to the reactive cysteines and the protein is inactive.

It is found in the cytoplasm. Its function is as follows. Redox regulated molecular chaperone. Protects both thermally unfolding and oxidatively damaged proteins from irreversible aggregation. Plays an important role in the bacterial defense system toward oxidative stress. This chain is 33 kDa chaperonin, found in Aliivibrio fischeri (strain ATCC 700601 / ES114) (Vibrio fischeri).